A 190-amino-acid chain; its full sequence is Venom nerve growth factor (190 aa).

The first 7 residues, 1–7 (FLIGIWA), serve as a signal peptide directing secretion. Positions 8–111 (APKSEDNVPL…SLNRNIRAKR (104 aa)) are excised as a propeptide. Cys-125 and Cys-190 are joined by a disulfide. A glycan (N-linked (GlcNAc...) asparagine) is linked at Asn-134.

It belongs to the NGF-beta family. As to quaternary structure, homodimer; non-covalently linked. Post-translationally, glycosylated. As to expression, expressed by the venom gland.

The protein resides in the secreted. In terms of biological role, nerve growth factor is important for the development and maintenance of the sympathetic and sensory nervous systems. It stimulates division and differentiation of sympathetic and embryonic sensory neurons as well as basal forebrain cholinergic neurons in the brain. Its relevance in the snake venom is not clear. However, it has been shown to inhibit metalloproteinase-dependent proteolysis of platelet glycoprotein Ib alpha, suggesting a metalloproteinase inhibition to prevent metalloprotease autodigestion and/or protection against prey proteases. Binds a lipid between the two protein chains in the homodimer. The lipid-bound form promotes histamine relase from mouse mast cells, contrary to the lipid-free form. This Agkistrodon contortrix contortrix (Southern copperhead) protein is Venom nerve growth factor.